The chain runs to 502 residues: Neuronal acetylcholine receptor subunit alpha-7 (502 aa).

A signal peptide spans 1–22; that stretch reads MCGRRGGIWLALAAALLHVSLQ. The Extracellular segment spans residues 23–233; it reads GEFQRRLYKE…VTMRRRTLYY (211 aa). 2 residues coordinate Ca(2+): arginine 42 and valine 44. Residues asparagine 46, asparagine 90, and asparagine 133 are each glycosylated (N-linked (GlcNAc...) asparagine). Cysteine 150 and cysteine 164 form a disulfide bridge. Serine 172 and tyrosine 210 together coordinate Ca(2+). Cysteine 212 and cysteine 213 form a disulfide bridge. 3 consecutive transmembrane segments (helical) span residues 234 to 254, 262 to 282, and 295 to 315; these read GLNLLIPCVLISALALLVFLL, ISLGITVLLSLTVFMLLVAEI, and QYFASTMIIVGLSVVVTVIVL. Positions 260–267 are essential for TMEM35A/NACHO-mediated proper subunit assembly and trafficking to cell membrane; sequence EKISLGIT. Residues 316-469 are Cytoplasmic-facing; it reads RYHHHDPDGG…WKFAACVVDR (154 aa). The helical transmembrane segment at 470–490 threads the bilayer; it reads LCLMAFSVFTIICTIGILMSA.

This sequence belongs to the ligand-gated ion channel (TC 1.A.9) family. Acetylcholine receptor (TC 1.A.9.1) subfamily. Alpha-7/CHRNA7 sub-subfamily. Homopentamer. Can also form heteropentamers with CHRNB2, mainly found in basal forebrain cholinergic neurons. Interacts with RIC3; which is required for proper folding and assembly. Interacts with LYPD6. Interacts with CANX. In terms of processing, glycosylations at Asn-46, Asn-90 and Asn-133 are essential for TMEM35A/NACHO-mediated proper subunit assembly and trafficking to the cell membrane. In terms of tissue distribution, higly expressed in brain. ALso expressed in immune cells sucha as macrophages.

The protein resides in the postsynaptic cell membrane. It localises to the cell membrane. The enzyme catalyses K(+)(in) = K(+)(out). It carries out the reaction Na(+)(in) = Na(+)(out). The catalysed reaction is Ca(2+)(in) = Ca(2+)(out). It catalyses the reaction choline(out) = choline(in). The enzyme catalyses NH4(+)(in) = NH4(+)(out). It carries out the reaction L-arginine(in) = L-arginine(out). The catalysed reaction is guanidine(out) = guanidine(in). With respect to regulation, activated by a myriad of ligands such as acetylcholine, cytisine, nicotine, choline and epibatidine. Oligomeric amyloid-beta protein 42 activates specifially CHRNA7:CHRNB2 nAchRs. Activity is modulated by positive allosteric modulators (PAMs), such as flavonoids, with a wide range of chemical diversity, pharmacological sensitivity and efficacy. AChR activity is inhibited by the antagonists alpha-conotoxons RgIA, ImI and ImII, small disulfide-constrained peptides from cone snails. In terms of biological role, component of neuronal acetylcholine receptors (nAChRs) that function as pentameric, ligand-gated cation channels with high calcium permeability among other activities. nAChRs are excitatory neurotrasnmitter receptors formed by a collection of nAChR subunits known to mediate synaptic transmission in the nervous system and the neuromuscular junction. Each nAchR subunit confers differential attributes to channel properties, including activation, deactivation and desensitization kinetics, pH sensitivity, cation permeability, and binding to allosteric modulators. CHRNA7 forms homopentameric neuronal acetylcholine receptors abundantly expressed in the central nervous system, characterized by fast desensitization and high calcium permeability. Also forms heteropentamers with CHRNB2, mainly expressed in basal forebrain cholinergic neurons. Involved in the modulation of calcium-dependent signaling pathways and influences the release of neurotransmitters, including dopamine, glutamate and GABA. Involved in the modulation of calcium-dependent signaling pathways and influences the release of neurotransmitters, including dopamine, glutamate and GABA. Also expressed in non-neuronal cells such as immune cells like lymphocytes, monocytes and macrophages. In T cells, activation induces metabotropic signaling that results in an increase of intracellular Ca2+ concentrations, independent of ionotropic receptor functions. In macrophages, required for acetylcholine-mediated inhibition of TNF and other inflammatory cytokine release. Once activated by acetylcholine, nicotine or other agonists, selectively inhibits production of pro-inflammatory cytokines while leaving anti-inflammatory cytokines undisturbed. Stimulates the cholinergic anti-inflammatory pathway, controlling inflammation by inhibiting NFKB nuclear translocation and activating the JAK2-STAT3 pathway, independently of ion channel activity. Also expressed in the urothelium where it modulates reflex bladder activity by increasing intracellular calcium through internal stores and decreasing basal ATP release. The polypeptide is Neuronal acetylcholine receptor subunit alpha-7 (Chrna7) (Mus musculus (Mouse)).